The chain runs to 341 residues: Adenine deaminase (341 aa).

Zn(2+) contacts are provided by His-24, His-26, and His-204. The Proton donor role is filled by Glu-207. Residue Asp-285 coordinates Zn(2+). Substrate is bound at residue Asp-286.

This sequence belongs to the metallo-dependent hydrolases superfamily. Adenosine and AMP deaminases family. Adenine deaminase type 2 subfamily. Zn(2+) serves as cofactor.

The catalysed reaction is adenine + H2O + H(+) = hypoxanthine + NH4(+). In terms of biological role, catalyzes the hydrolytic deamination of adenine to hypoxanthine. Plays an important role in the purine salvage pathway and in nitrogen catabolism. The protein is Adenine deaminase of Sphingopyxis alaskensis (strain DSM 13593 / LMG 18877 / RB2256) (Sphingomonas alaskensis).